The following is a 458-amino-acid chain: Periphilin-1 (458 aa).

Basic and acidic residues-rich tracts occupy residues 1–18 (MWSEGRYEYERIPRERAP) and 63–107 (EGRS…DGFR). Disordered stretches follow at residues 1 to 51 (MWSE…SYNR) and 63 to 284 (EGRS…LFED). A Nuclear localization signal motif is present at residues 103-109 (RDGFRRK). Lys109 participates in a covalent cross-link: Glycyl lysine isopeptide (Lys-Gly) (interchain with G-Cter in SUMO2). Residues Ser110, Ser114, Ser133, and Ser140 each carry the phosphoserine modification. The span at 116-142 (YARERSPYKRDNTFFRESPVGRKDSPH) shows a compositional bias: basic and acidic residues. Positions 143-154 (SRSGSSVSSRSY) are enriched in low complexity. Residue Lys160 forms a Glycyl lysine isopeptide (Lys-Gly) (interchain with G-Cter in SUMO2) linkage. Phosphoserine occurs at positions 161 and 167. Lys180 participates in a covalent cross-link: Glycyl lysine isopeptide (Lys-Gly) (interchain with G-Cter in SUMO2). A compositionally biased stretch (basic and acidic residues) spans 181–194 (RQNEGNPERDKERP). A Phosphoserine modification is found at Ser197. Residue Lys199 forms a Glycyl lysine isopeptide (Lys-Gly) (interchain with G-Cter in SUMO2) linkage. 2 positions are modified to phosphoserine: Ser201 and Ser205. Residues 205–215 (SPSSGSAVSSS) are compositionally biased toward low complexity. Residues 217–230 (VLDKPSRLTEKELA) show a composition bias toward basic and acidic residues. Lys227 is covalently cross-linked (Glycyl lysine isopeptide (Lys-Gly) (interchain with G-Cter in SUMO2)). An N6-acetyllysine; alternate mark is found at Lys235 and Lys240. Glycyl lysine isopeptide (Lys-Gly) (interchain with G-Cter in SUMO2); alternate cross-links involve residues Lys235 and Lys240. A compositionally biased stretch (basic and acidic residues) spans 237-246 (AAEKLEKSDE). Position 325 is a phosphoserine (Ser325). A Glycyl lysine isopeptide (Lys-Gly) (interchain with G-Cter in SUMO2) cross-link involves residue Lys328. A disordered region spans residues 345-406 (GQTWQQVPPV…TQLRRTTGAP (62 aa)). A compositionally biased stretch (pro residues) spans 377-386 (PQPPQAPQPL). Over residues 388-398 (PRKKRVRRTTQ) the composition is skewed to basic residues. A Glycyl lysine isopeptide (Lys-Gly) (interchain with G-Cter in SUMO2) cross-link involves residue Lys453.

In terms of assembly, homodimer. Component of the HUSH complex; at least composed of TASOR, PPHLN1 and MPHOSPH8. Interacts with SIN3A and HDAC1. May interact with PPL. In terms of processing, substrate of transglutaminase (in vitro). In terms of tissue distribution, ubiquitous.

The protein resides in the nucleus. Its subcellular location is the cytoplasm. It is found in the chromosome. Component of the HUSH complex, a multiprotein complex that mediates epigenetic repression. The HUSH complex is recruited to genomic loci rich in H3K9me3 and is probably required to maintain transcriptional silencing by promoting recruitment of SETDB1, a histone methyltransferase that mediates further deposition of H3K9me3. In the HUSH complex, contributes to the maintenance of the complex at chromatin. Acts as a transcriptional corepressor and regulates the cell cycle, probably via the HUSH complex. The HUSH complex is also involved in the silencing of unintegrated retroviral DNA: some part of the retroviral DNA formed immediately after infection remains unintegrated in the host genome and is transcriptionally repressed. May be involved in epithelial differentiation by contributing to epidermal integrity and barrier formation. This is Periphilin-1 from Homo sapiens (Human).